The sequence spans 634 residues: BTB/POZ domain-containing protein At1g03010 (634 aa).

One can recognise a BTB domain in the interval 38–103 (SDLTVQVGSS…CYGINIEINL (66 aa)). Positions 205 to 503 (DWWGKSLAVL…VQVLYFEQIR (299 aa)) constitute an NPH3 domain. Tyr-444 carries the post-translational modification Phosphotyrosine. Residues 542–580 (RDNYASVRRENRELKLEVARMRMRLTDLEKDHISIKQEL) are a coiled coil.

This sequence belongs to the NPH3 family.

Its pathway is protein modification; protein ubiquitination. In terms of biological role, may act as a substrate-specific adapter of an E3 ubiquitin-protein ligase complex (CUL3-RBX1-BTB) which mediates the ubiquitination and subsequent proteasomal degradation of target proteins. The sequence is that of BTB/POZ domain-containing protein At1g03010 from Arabidopsis thaliana (Mouse-ear cress).